We begin with the raw amino-acid sequence, 262 residues long: Abhydrolase domain-containing protein ACTT2-2 (262 aa).

The Peroxisomal targeting signal type 1 motif lies at 260 to 262; the sequence is SKL.

The protein belongs to the AB hydrolase superfamily. AKT2 hydrolase family.

It localises to the peroxisome. Its pathway is mycotoxin biosynthesis. In terms of biological role, abhydrolase domain-containing protein; part of the gene clusters that mediate the biosynthesis of the host-selective toxins (HSTs) ACT-toxins responsible for brown spot of tangerine disease by the tangerine pathotype which affects tangerines and mandarins. ACT-toxins consist of three moieties, 9,10-epoxy-8-hydroxy-9-methyl-decatrienoic acid (EDA), valine and a polyketide. ACT-toxin I is toxic to both citrus and pear; toxin II the 5''-deoxy derivative of ACT-toxin I, is highly toxic to pear and slightly toxic to citrus. On cellular level, ACT-toxins affect plasma membrane of susceptible cells and cause a sudden increase in loss of K(+) after a few minutes of toxin treatment. The acyl-CoA ligase ACTT1, the hydrolase ACTT2, the enoyl-CoA hydratases ACTT3 and ACTT6, and the acyl-CoA synthetase ACTT5 are all involved in the biosynthesis of the AK-, AF- and ACT-toxin common 9,10-epoxy-8-hydroxy-9-methyl-decatrienoic acid (EDA) structural moiety. The exact role of each enzyme, and of additional enzymes identified within the AF-toxin clusters have still to be determined. On the other hand, ACTTS1 to ACTTS4 are specific to the tangerine pathotype. The function of ACTTS3 is to elongate the polyketide chain portion of ACT-toxin that is unique to this toxin. The enoyl-reductase ACTTS2 might complement the missing enoyl-reductase (ER) domain in ACTTS3 in the synthesis of the polyketide portion of ACT-toxin. The roles of the nonribosomal peptide synthetases-related proteins ACTTS1 and ACTTS4 have also still not been elucidated. This is Abhydrolase domain-containing protein ACTT2-2 (ACTT2-2) from Alternaria alternata (Alternaria rot fungus).